The chain runs to 1122 residues: Histidine kinase CKI1 (1122 aa).

The Cytoplasmic segment spans residues 1-12 (MMVKVTKLVASR). Residues 13–33 (PIVVFCVLAFLVVVFECIWIS) traverse the membrane as a helical segment. The Extracellular segment spans residues 34–345 (NWRTTTENLV…KHQAEKAKYQ (312 aa)). A helical membrane pass occupies residues 346–366 (LIVVMIFLGFGWPVWFVWFMM). Residues 367-1122 (QATRREMHMR…VIREIESKRH (756 aa)) are Cytoplasmic-facing. The region spanning 402-671 (NASHDIRGAL…CFQFNVLLTT (270 aa)) is the Histidine kinase domain. A Phosphohistidine; by autocatalysis modification is found at H405. The span at 918 to 928 (AERSPKHKVQE) shows a compositional bias: basic and acidic residues. The disordered stretch occupies residues 918-981 (AERSPKHKVQ…QETSKPSDDE (64 aa)). A Response regulatory domain is found at 987–1120 (RVLVVDDNFI…ANVIREIESK (134 aa)). D1050 is modified (4-aspartylphosphate).

Homodimer. Interacts with AHP2 and AHP3. In terms of tissue distribution, expressed in vascular tissues of inflorescence stems and floral organs, especially in procambium cells, and in siliques.

It localises to the cell membrane. The enzyme catalyses ATP + protein L-histidine = ADP + protein N-phospho-L-histidine.. In terms of biological role, essential protein. Functions as a histidine kinase and transmits the stress signal to a downstream MAPK cascade. This protein undergoes an ATP-dependent autophosphorylation at a conserved histidine residue in the kinase core, and a phosphoryl group is then transferred to a conserved aspartate residue in the receiver domain. Required for the development of megagametophyte in female gametophyte (embryo sac) independently of cytokinin. Contributes to vascular bundle formation and secondary growth in a cytokinin-independent manner, probably by promoting the maintenance of mitotic activity and/or identity of procambial cells. Seems to influence and promote the cytokinin signaling pathway. This is Histidine kinase CKI1 (CKI1) from Arabidopsis thaliana (Mouse-ear cress).